A 72-amino-acid polypeptide reads, in one-letter code: Mu-like prophage FluMu protein C (72 aa).

Positions 35 to 55 form a DNA-binding region, H-T-H motif; the sequence is NVPDLIKKYRLSESTIYAILR.

It belongs to the c/mor transcriptional regulatory family.

Its function is as follows. Required for transcription of the phage late genes. The protein is Mu-like prophage FluMu protein C of Haemophilus influenzae (strain ATCC 51907 / DSM 11121 / KW20 / Rd).